A 317-amino-acid chain; its full sequence is MKNGRGNRVAVVGTGFVGASYAFALMNQGIADEIVLIDANENKAEGDAMDFNHGKVFAPKPADIWHGDYDDCRDADLVVICAGANQKPGETRLDLVDKNIAIFRSIVESVMASGFQGLFLVATNPVDILTYATWKFSGLPQERVIGSGTILDTARFRFLLGDYFAVAPTNVHAYIIGEHGDTELPVWSQADIGGVPIRKLVESKGEEAQKELERIFVNVRDAAYQIIEKKGATYYGIAMGLARVTRAILHHENAILTVSAYLDGPYGERDVYIGVPAVINRNGIREVIEIELDEEEKKWFHRSAATLKGVLARYFAQ.

NAD(+)-binding positions include Val17, Asp38, Lys43, Tyr69, and 83–84 (GA). Substrate is bound by residues Gln86 and Arg92. NAD(+) is bound by residues Ser105, 122–124 (ATN), and Ser147. Position 124–127 (124–127 (NPVD)) interacts with substrate. 152–155 (DTAR) provides a ligand contact to substrate. The beta-D-fructose 1,6-bisphosphate site is built by Arg157 and His172. His179 serves as the catalytic Proton acceptor. Tyr224 carries the phosphotyrosine modification. Thr233 is a substrate binding site.

It belongs to the LDH/MDH superfamily. LDH family. As to quaternary structure, homotetramer.

The protein resides in the cytoplasm. It catalyses the reaction (S)-lactate + NAD(+) = pyruvate + NADH + H(+). It functions in the pathway fermentation; pyruvate fermentation to lactate; (S)-lactate from pyruvate: step 1/1. Its activity is regulated as follows. Allosterically activated by fructose 1,6-bisphosphate (FBP). Its function is as follows. Catalyzes the conversion of lactate to pyruvate. This Geobacillus kaustophilus (strain HTA426) protein is L-lactate dehydrogenase.